The primary structure comprises 95 residues: UPF0235 protein Pcar_0617 (95 aa).

The protein belongs to the UPF0235 family.

This Syntrophotalea carbinolica (strain DSM 2380 / NBRC 103641 / GraBd1) (Pelobacter carbinolicus) protein is UPF0235 protein Pcar_0617.